The chain runs to 384 residues: Glucans biosynthesis protein C (384 aa).

The next 10 helical transmembrane spans lie at 17 to 37 (AWLM…THSW), 54 to 74 (FIHA…SYML), 91 to 111 (VGIP…ILLQ), 140 to 160 (LWFL…FTWF), 173 to 193 (AISL…YAAI), 212 to 232 (FIVM…LAFI), 240 to 260 (FTTP…AYLL), 274 to 294 (TESV…FSLG), 311 to 331 (ASLF…AYIT), and 338 to 358 (LIGF…LYEI).

The protein belongs to the acyltransferase 3 family. OpgC subfamily.

It localises to the cell membrane. The protein operates within glycan metabolism; osmoregulated periplasmic glucan (OPG) biosynthesis. In terms of biological role, necessary for the succinyl substitution of periplasmic glucans. Could catalyze the transfer of succinyl residues from the cytoplasmic side of the membrane to the nascent glucan backbones on the periplasmic side of the membrane. This chain is Glucans biosynthesis protein C, found in Salmonella typhi.